We begin with the raw amino-acid sequence, 327 residues long: Zinc transport protein ZntB (327 aa).

Over 1-273 the chain is Cytoplasmic; that stretch reads MEAIKGSDVN…ARRTYTMSLM (273 aa). The chain crosses the membrane as a helical span at residues 274–294; that stretch reads AMVFLPSTFLTGLFGVNLGGI. Residues 295–300 are Periplasmic-facing; it reads PGGGWQ. Residues 301–321 traverse the membrane as a helical segment; sequence FGFSIFCILLVVLIGGVALWL. Topologically, residues 322–327 are cytoplasmic; the sequence is HRSKWL.

Belongs to the CorA metal ion transporter (MIT) (TC 1.A.35) family.

The protein resides in the cell inner membrane. The catalysed reaction is Zn(2+)(out) + H(+)(out) = Zn(2+)(in) + H(+)(in). In terms of biological role, zinc transporter. Acts as a Zn(2+):proton symporter, which likely mediates zinc ion uptake. The polypeptide is Zinc transport protein ZntB (Escherichia coli O6:K15:H31 (strain 536 / UPEC)).